We begin with the raw amino-acid sequence, 770 residues long: Transcription activator AMTR1 (770 aa).

Residues 7–34 (CLTCRQRKLKCDEKKPVCRQCAKASREC) constitute a DNA-binding region (zn(2)-C6 fungal-type).

The protein resides in the nucleus. Its function is as follows. Transcription factor that regulates the expression of the gene clusters that mediate the biosynthesis of AM-toxins, host-selective toxins (HSTs) causing Alternaria blotch on apple, a worldwide distributed disease. AM-toxins have two target sites for affecting susceptible apple cells; they cause invagination of the plasma membrane and electrolyte loss and chloroplast disorganization. This chain is Transcription activator AMTR1, found in Alternaria alternata (Alternaria rot fungus).